Reading from the N-terminus, the 930-residue chain is Dual serine/threonine and tyrosine protein kinase (930 aa).

Low complexity predominate over residues 1-14 (MEGDGVPWGSEPVS). The tract at residues 1–22 (MEGDGVPWGSEPVSGPGPGGGG) is disordered. 2 coiled-coil regions span residues 190–216 (EEDL…MHHA) and 396–432 (RKKE…KEEL). One can recognise a Protein kinase domain in the interval 653 to 907 (PKLGQELGRG…PLLGIVQPML (255 aa)). ATP is bound by residues 659–667 (LGRGQYGVV) and Lys-682. Catalysis depends on Asp-778, which acts as the Proton acceptor.

The protein belongs to the protein kinase superfamily. Ser/Thr protein kinase family.

It localises to the cytoplasm. It is found in the cell membrane. The protein localises to the apical cell membrane. The protein resides in the basolateral cell membrane. Its subcellular location is the cell junction. The enzyme catalyses L-seryl-[protein] + ATP = O-phospho-L-seryl-[protein] + ADP + H(+). It catalyses the reaction L-threonyl-[protein] + ATP = O-phospho-L-threonyl-[protein] + ADP + H(+). The catalysed reaction is L-tyrosyl-[protein] + ATP = O-phospho-L-tyrosyl-[protein] + ADP + H(+). Acts as a positive regulator of ERK phosphorylation downstream of fibroblast growth factor-receptor activation. Involved in the regulation of both caspase-dependent apoptosis and caspase-independent cell death. In the skin, it plays a predominant role in suppressing caspase-dependent apoptosis in response to UV stress in a range of dermal cell types. The chain is Dual serine/threonine and tyrosine protein kinase (DSTYK) from Pan troglodytes (Chimpanzee).